The primary structure comprises 142 residues: Putative pre-16S rRNA nuclease (142 aa).

The protein belongs to the YqgF nuclease family.

It localises to the cytoplasm. Its function is as follows. Could be a nuclease involved in processing of the 5'-end of pre-16S rRNA. The polypeptide is Putative pre-16S rRNA nuclease (Lactobacillus acidophilus (strain ATCC 700396 / NCK56 / N2 / NCFM)).